Reading from the N-terminus, the 275-residue chain is Ciliary microtubule inner protein 2B (275 aa).

Disordered regions lie at residues 62-84 (PPIR…RGQE) and 125-169 (EKQG…SPYS). Composition is skewed to basic and acidic residues over residues 71 to 84 (EVPR…RGQE) and 125 to 147 (EKQG…KDQV).

The protein belongs to the CIMIP2 family. As to quaternary structure, microtubule inner protein component of sperm flagellar doublet microtubules. Expressed in airway epithelial cells.

Its subcellular location is the cytoplasm. It localises to the cytoskeleton. The protein resides in the cilium axoneme. The protein localises to the flagellum axoneme. In terms of biological role, microtubule inner protein (MIP) part of the dynein-decorated doublet microtubules (DMTs) in cilia axoneme, which is required for motile cilia beating. The sequence is that of Ciliary microtubule inner protein 2B from Homo sapiens (Human).